A 357-amino-acid polypeptide reads, in one-letter code: MSAFEKPQIIAHIQKGFNYTVFDCKWVPCSAKFVTMGNFARGTGVIQLYEIQHGDLKLLREIEKAKPIKCGTFGATSLQQRYLATGDFGGNLHIWNLEAPEMPVYSVKGHKEIINAIDGIGGLGIGEGAPEIVTGSRDGTVKVWDPRQKDDPVANMEPVQGENKRDCWTVAFGNAYNQEERVVCAGYDNGDIKLFDLRNMALRWETNIKNGVCSLEFDRKDISMNKLVATSLEGKFHVFDMRTQHPTKGFASVSEKAHKSTVWQVRHLPQNRELFLTAGGAGGLHLWKYEYPIQRSKKDSEGIEMGVAGSVSLLQNVTLSTQPISSLDWSPDKRGLCVCSSFDQTVRVLIVTKLNKI.

WD repeat units follow at residues 63 to 105 (EKAK…MPVY), 115 to 154 (NAID…DPVA), 162 to 205 (ENKR…LRWE), 207 to 249 (NIKN…PTKG), 257 to 297 (AHKS…QRSK), and 319 to 357 (LSTQ…LNKI).

Component of the PAQosome complex which is responsible for the biogenesis of several protein complexes and which consists of R2TP complex members RUVBL1, RUVBL2, RPAP3 and PIH1D1, URI complex members PFDN2, PFDN6, PDRG1, UXT and URI1 as well as ASDURF, POLR2E and DNAAF10/WDR92. Interacts with PIH1D1; the interaction associates DNAAF10 with the R2TP complex. Interacts with several dynein axonemal assembly factors. In terms of tissue distribution, widely expressed with the highest expression in testis.

The protein resides in the dynein axonemal particle. Its function is as follows. Key assembly factor specifically required for the stability of axonemal dynein heavy chains in cytoplasm. This is Dynein axonemal assembly factor 10 from Homo sapiens (Human).